A 1028-amino-acid chain; its full sequence is Contactin-6 (1028 aa).

The N-terminal stretch at 1 to 19 is a signal peptide; the sequence is MRLLWKLVILLPLINSCAG. 6 consecutive Ig-like C2-type domains span residues 32–117, 122–208, 227–308, 318–402, 408–495, and 499–587; these read PQDV…AKLQ, EDFE…RSVQ, PKIE…RNLA, PEWE…AELR, PDFS…GSLI, and RTVI…ERLS. 6 cysteine pairs are disulfide-bonded: cysteine 50–cysteine 100, cysteine 144–cysteine 196, cysteine 249–cysteine 297, cysteine 339–cysteine 386, cysteine 431–cysteine 479, and cysteine 521–cysteine 577. Residues asparagine 65 and asparagine 193 are each glycosylated (N-linked (GlcNAc...) asparagine). N-linked (GlcNAc...) asparagine glycosylation is found at asparagine 368, asparagine 377, and asparagine 468. Fibronectin type-III domains follow at residues 600-698, 703-800, 805-901, and 902-996; these read PPED…TKAS, APVN…SGED, APRG…TKKS, and PPSQ…KMSS. N-linked (GlcNAc...) asparagine glycans are attached at residues asparagine 659, asparagine 765, asparagine 860, and asparagine 865. Tyrosine 882 carries the post-translational modification Phosphotyrosine. Residues 887-902 are compositionally biased toward polar residues; that stretch reads TGPSSPPVNVTTKKSP. The segment at 887–908 is disordered; that stretch reads TGPSSPPVNVTTKKSPPSQPPA. Asparagine 895, asparagine 931, asparagine 956, and asparagine 957 each carry an N-linked (GlcNAc...) asparagine glycan. Residue serine 999 is the site of GPI-anchor amidated serine attachment. Positions 1000–1028 are cleaved as a propeptide — removed in mature form; sequence VGVQILKPSTQFLTMVGFFYCFVIQPLSR.

Belongs to the immunoglobulin superfamily. Contactin family. As to quaternary structure, interacts with PTPRG. As to expression, specifically expressed in neuronal cells. In brain, it is expressed in spinal cord, cerebrum and cerebellum. At 17 dpc, it is expressed in hippocampus, cerebellum, and the brain stem. Strongly expressed after birth with a maximum level between P1 and P21, which corresponds to the time frame of oligodendrogliogenesis.

The protein localises to the cell membrane. Functionally, contactins mediate cell surface interactions during nervous system development. Participates in oligodendrocytes generation by acting as a ligand of NOTCH1. Its association with NOTCH1 promotes NOTCH1 activation through the released notch intracellular domain (NICD) and subsequent translocation to the nucleus. May be involved in motor coordination. The sequence is that of Contactin-6 (Cntn6) from Rattus norvegicus (Rat).